The sequence spans 503 residues: Guanosine-5'-triphosphate,3'-diphosphate pyrophosphatase (503 aa).

This sequence belongs to the GppA/Ppx family. GppA subfamily.

The enzyme catalyses guanosine 3'-diphosphate 5'-triphosphate + H2O = guanosine 3',5'-bis(diphosphate) + phosphate + H(+). It functions in the pathway purine metabolism; ppGpp biosynthesis; ppGpp from GTP: step 2/2. Catalyzes the conversion of pppGpp to ppGpp. Guanosine pentaphosphate (pppGpp) is a cytoplasmic signaling molecule which together with ppGpp controls the 'stringent response', an adaptive process that allows bacteria to respond to amino acid starvation, resulting in the coordinated regulation of numerous cellular activities. This Pseudoalteromonas atlantica (strain T6c / ATCC BAA-1087) protein is Guanosine-5'-triphosphate,3'-diphosphate pyrophosphatase.